A 931-amino-acid chain; its full sequence is Isoleucine--tRNA ligase (931 aa).

Residues Met-1–Phe-14 are compositionally biased toward polar residues. A disordered region spans residues Met-1 to Pro-25. Residues Pro-57 to His-67 carry the 'HIGH' region motif. Residue Glu-559 coordinates L-isoleucyl-5'-AMP. The 'KMSKS' region motif lies at Lys-600–Ser-604. Lys-603 provides a ligand contact to ATP. Cys-898, Cys-901, Cys-918, and Cys-921 together coordinate Zn(2+).

It belongs to the class-I aminoacyl-tRNA synthetase family. IleS type 1 subfamily. In terms of assembly, monomer. Zn(2+) serves as cofactor.

Its subcellular location is the cytoplasm. It carries out the reaction tRNA(Ile) + L-isoleucine + ATP = L-isoleucyl-tRNA(Ile) + AMP + diphosphate. Its function is as follows. Catalyzes the attachment of isoleucine to tRNA(Ile). As IleRS can inadvertently accommodate and process structurally similar amino acids such as valine, to avoid such errors it has two additional distinct tRNA(Ile)-dependent editing activities. One activity is designated as 'pretransfer' editing and involves the hydrolysis of activated Val-AMP. The other activity is designated 'posttransfer' editing and involves deacylation of mischarged Val-tRNA(Ile). The sequence is that of Isoleucine--tRNA ligase from Desulforamulus reducens (strain ATCC BAA-1160 / DSM 100696 / MI-1) (Desulfotomaculum reducens).